A 472-amino-acid polypeptide reads, in one-letter code: tRNA-2-methylthio-N(6)-dimethylallyladenosine synthase (472 aa).

In terms of domain architecture, MTTase N-terminal spans 22–142 (RKVFVKTYGC…LPDALKRARA (121 aa)). [4Fe-4S] cluster-binding residues include Cys31, Cys67, Cys105, Cys183, Cys187, and Cys190. In terms of domain architecture, Radical SAM core spans 169-403 (RARGVTAFLT…LLVKQQRGFA (235 aa)). One can recognise a TRAM domain in the interval 404-466 (EACVGREIDL…PNSLFAEMIG (63 aa)).

The protein belongs to the methylthiotransferase family. MiaB subfamily. In terms of assembly, monomer. Requires [4Fe-4S] cluster as cofactor.

It localises to the cytoplasm. The enzyme catalyses N(6)-dimethylallyladenosine(37) in tRNA + (sulfur carrier)-SH + AH2 + 2 S-adenosyl-L-methionine = 2-methylsulfanyl-N(6)-dimethylallyladenosine(37) in tRNA + (sulfur carrier)-H + 5'-deoxyadenosine + L-methionine + A + S-adenosyl-L-homocysteine + 2 H(+). Catalyzes the methylthiolation of N6-(dimethylallyl)adenosine (i(6)A), leading to the formation of 2-methylthio-N6-(dimethylallyl)adenosine (ms(2)i(6)A) at position 37 in tRNAs that read codons beginning with uridine. In Rhizobium meliloti (strain 1021) (Ensifer meliloti), this protein is tRNA-2-methylthio-N(6)-dimethylallyladenosine synthase.